Here is a 123-residue protein sequence, read N- to C-terminus: Small ribosomal subunit protein uS12 (123 aa).

The segment at 1-30 is disordered; it reads MPTIQQLIRKPRQPKIKRSKSQHMEGCPQK. Residues 9 to 21 show a composition bias toward basic residues; sequence RKPRQPKIKRSKS. The residue at position 89 (D89) is a 3-methylthioaspartic acid. The disordered stretch occupies residues 104–123; that stretch reads TQGVKDRRQRRSKYGAKRPK. Positions 110–123 are enriched in basic residues; it reads RRQRRSKYGAKRPK.

This sequence belongs to the universal ribosomal protein uS12 family. In terms of assembly, part of the 30S ribosomal subunit. Contacts proteins S8 and S17. May interact with IF1 in the 30S initiation complex.

In terms of biological role, with S4 and S5 plays an important role in translational accuracy. Interacts with and stabilizes bases of the 16S rRNA that are involved in tRNA selection in the A site and with the mRNA backbone. Located at the interface of the 30S and 50S subunits, it traverses the body of the 30S subunit contacting proteins on the other side and probably holding the rRNA structure together. The combined cluster of proteins S8, S12 and S17 appears to hold together the shoulder and platform of the 30S subunit. This is Small ribosomal subunit protein uS12 from Jannaschia sp. (strain CCS1).